The following is a 965-amino-acid chain: MASSHSSSPVPQGSSSDVFFKKEVDPTKHVRPVQSLPDVCPKEPTVTDQHRWTVYHSKVNLPAALNDPTLAKRESDFFTKTWGLGFVDTEVIPSLYLPQISKEHFIAYQQEISQREKIHERCKNICPPKDTFDRTLLHIHDKSRTDLEQVPKIFMKPDFALDDSLTFNSVLPWSHFNTAGGKGNRDAASSKLLQEKLSHYLDIVEVNIAHQISLRSEAFFHAMTSQHELQDYLKKTSQAVKMLRDKIAQIDKVMCEGSLQILRLALTRNNCVKVSNKLKLMATVHQTQPTVQVLLSTSEFVGALDLIATTQEVLQQELQGVHSFRHLGSQLCELEKLIDKMMIAEFSTYSHSDLNRPLEGECQVLEEERLVSLVFGLLEQRKLNFLEIYGEETIITAKNIIKECVINKVAQVEEIDTDAVVKLADQMRMLNFPQWIDLLKDIFSKFTIFLQRVKATLNVIHSVVLSVLDKNQRTRELEEVSQQRSAGKDNSLDTEVAYLTHEGLFISDAFSEAEPASAAVDTTSQRNTSPHSEPCSSDSVSEPECTTDSSSSKEQTPASATLGGVDIIVSEDMRLTDLELGKLASNIQELLCNASDVCHDRAVKFLMSRAKDGFLEKLNSTEFIALSRLMETYIVDTEQICGRKSTSLLGALQSQANKFVNRFHEERRTKLSLLLDNERWKQADVPAEFQDLVDSIADGKIALPDKKPAATEDRKPADVLVVEGHQYAVVGTVLLLIRIILEYCQCVDNIPSVTTDMLTRLTDLLKYFNSRSCQLVLGAGALQVVGLKTITTKNLALSSRCLQLIVHYIPVIRAHFEARLPRKQWSLLRHFDHITKDYHDHIGEISSKLIAIMDSLFDKLLSRCEVEAPAPSPCFRNICKQMTKMHEAIFDLLPKEQTQMLILRINASYKFHLKKQLSHLNVINDGGPQSGFVTADVAFYTGNLQALKGLKDLDLNMAEIWEQKR.

S8 bears the Phosphoserine mark. Positions 228–249 (ELQDYLKKTSQAVKMLRDKIAQ) form a coiled coil. Positions 516–558 (ASAAVDTTSQRNTSPHSEPCSSDSVSEPECTTDSSSSKEQTPA) are disordered. Polar residues predominate over residues 520 to 558 (VDTTSQRNTSPHSEPCSSDSVSEPECTTDSSSSKEQTPA).

This sequence belongs to the VPS54 family. As to quaternary structure, component of the Golgi-associated retrograde protein (GARP) complex, also called VFT (VPS fifty-three) complex, composed of VPS51, VPS52, VPS53 and VPS54. EIPR1 interacts with GARP complex and mediates its recruitment to the trans-Golgi network. Interacts with VPS51 in an EIPR1-independent manner. As to expression, ubiquitously expressed at low level.

It is found in the golgi apparatus. It localises to the trans-Golgi network. The protein resides in the membrane. Functionally, acts as a component of the GARP complex that is involved in retrograde transport from early and late endosomes to the trans-Golgi network (TGN). The GARP complex is required for the maintenance of the cycling of mannose 6-phosphate receptors between the TGN and endosomes, this cycling is necessary for proper lysosomal sorting of acid hydrolases such as CTSD. Within the GARP complex, required to tether the complex to the TGN. Not involved in endocytic recycling. The sequence is that of Vacuolar protein sorting-associated protein 54 (Vps54) from Rattus norvegicus (Rat).